The primary structure comprises 475 residues: Sulfate adenylyltransferase subunit 1 (475 aa).

In terms of domain architecture, tr-type G spans 25–239 (KSLLRFLTCG…EVLETVEIQR (215 aa)). The interval 34 to 41 (GSVDDGKS) is G1. 34-41 (GSVDDGKS) contacts GTP. The segment at 92 to 96 (GITID) is G2. Residues 113–116 (DTPG) form a G3 region. Residues 113–117 (DTPGH) and 168–171 (NKMD) contribute to the GTP site. A G4 region spans residues 168-171 (NKMD). Residues 206 to 208 (SAL) are G5.

Belongs to the TRAFAC class translation factor GTPase superfamily. Classic translation factor GTPase family. CysN/NodQ subfamily. As to quaternary structure, heterodimer composed of CysD, the smaller subunit, and CysN.

It catalyses the reaction sulfate + ATP + H(+) = adenosine 5'-phosphosulfate + diphosphate. Its pathway is sulfur metabolism; hydrogen sulfide biosynthesis; sulfite from sulfate: step 1/3. In terms of biological role, with CysD forms the ATP sulfurylase (ATPS) that catalyzes the adenylation of sulfate producing adenosine 5'-phosphosulfate (APS) and diphosphate, the first enzymatic step in sulfur assimilation pathway. APS synthesis involves the formation of a high-energy phosphoric-sulfuric acid anhydride bond driven by GTP hydrolysis by CysN coupled to ATP hydrolysis by CysD. This is Sulfate adenylyltransferase subunit 1 from Escherichia coli O127:H6 (strain E2348/69 / EPEC).